The following is a 130-amino-acid chain: MIRNQYYGTGRRKSASARVFLRFGNGDIVINNLSLDKYFPKDNFQIIIKKPLEVTNVLNILDAYITVIGGGVSGQAGAISHGITRALLQYNAEFKSVLRATGLMTRDSRMVERKKVGLRKARRSPQFSKR.

Belongs to the universal ribosomal protein uS9 family.

The chain is Small ribosomal subunit protein uS9 from Blochmanniella floridana.